The sequence spans 421 residues: MLELKFVRNNPDIVGRALVNRNMGTELIDSLLEYDVAWRKCLTEGDSLKHKRNVVTREIAQLKKENKDTLSKINEMQDINNRIKEIDDKIRDYKSKINEIMLSIPNIPSETTPVGKDENDNPVVRVVGEKKKFTFTPKPHWEIGEALDILDFERGAKIAGQGFTVYKGLGAKLERALINFMLDVHTRQGYLEVFPPVLINEKAMTGTGQLPKFKEDMYLCCADGYYLAPTAEVPVTNLFMDEYMENLPVSLTAYTACFRREAGKHGQDTRGIIRQHQFNKVELVKFVKPETSYEELEKLTLDAEEILKLLKLPYRLVTLCTGDLGFSAAKTYDIEVWVPTQEKYREISSCSNFENFQARRANIRFRTPEGPQFVHTLNGSGLAVGRTVVAILENYQREDGSVEIPEVLRPYMGGVEEIREE.

An L-serine-binding site is contributed by 230-232 (TAE). 259–261 (RRE) contacts ATP. Glutamate 282 is an L-serine binding site. 346–349 (EISS) provides a ligand contact to ATP. Serine 380 lines the L-serine pocket.

It belongs to the class-II aminoacyl-tRNA synthetase family. Type-1 seryl-tRNA synthetase subfamily. In terms of assembly, homodimer. The tRNA molecule binds across the dimer.

The protein resides in the cytoplasm. It carries out the reaction tRNA(Ser) + L-serine + ATP = L-seryl-tRNA(Ser) + AMP + diphosphate + H(+). The catalysed reaction is tRNA(Sec) + L-serine + ATP = L-seryl-tRNA(Sec) + AMP + diphosphate + H(+). It participates in aminoacyl-tRNA biosynthesis; selenocysteinyl-tRNA(Sec) biosynthesis; L-seryl-tRNA(Sec) from L-serine and tRNA(Sec): step 1/1. Its function is as follows. Catalyzes the attachment of serine to tRNA(Ser). Is also able to aminoacylate tRNA(Sec) with serine, to form the misacylated tRNA L-seryl-tRNA(Sec), which will be further converted into selenocysteinyl-tRNA(Sec). The chain is Serine--tRNA ligase from Methanosarcina acetivorans (strain ATCC 35395 / DSM 2834 / JCM 12185 / C2A).